Reading from the N-terminus, the 604-residue chain is uncharacterized protein (604 aa).

The first 40 residues, 1–40 (MWLQQRIKVFPGLLSSSWARRVLAVSGFLVIIYWYIFSGS), serve as a signal peptide directing secretion. Residues 41–563 (HYRSFWYSGK…EEHMAKQYRG (523 aa)) lie on the Extracellular side of the membrane. Asn-337 carries an N-linked (GlcNAc...) asparagine glycan. Residues 564–584 (LPFLFWFSVASLITLFHLFLF) form a helical membrane-spanning segment. Over 585–604 (KLIYNEYCGPGAKPLFRSKV) the chain is Cytoplasmic.

It localises to the membrane. This is an uncharacterized protein from Xenopus laevis (African clawed frog).